Here is a 989-residue protein sequence, read N- to C-terminus: RIRYKGIVCDRCGVEVTSSKVRRERMGHIELAAPVTHIWYFKGIPSRMGLVLDMSPRSLEEIIYFASYVVIEPGDAPVEKKQMVTEREYRQLKKEYGAGFKAGMGAEAIKELLANVDLAGERDELKRELQEATGQKRVRAVRRLDIVEAFLQSDNKPEWMVMDVVPVIPPDLRPMVQLEGGRFATSDLNDLYRRVINRNNRLKRLLDLNAPGIIVQNEKRMLQEAVDALIDNGRRGRPVAGPGNRPLKSLSHMLKGKQGRFRQNLLGKRVDYSGRSVIDVGPFLKMNQMGLPVPMAIELFRPFIMKELTTRKLAGNVKSAKRKIDKADGDVMDVLEDVIKEHPVLLNRAPTLHRLGIQAFEPVLVSGKAMRLHPLVTEAYNADFDGDQMAIHVPLSDEAQAEARLLMLAAGHILAPKDGKPIVAPSQDMVIGNYYLTTEEAGREGEGMIFSGVDEARIAFARKVVHYHTRVGIQTSSFPAEKPFTDEQRSKVMVTSVGKLIFNEILPTDFPFINEPSEDNFKGVDDRFFIESGEDIHDYLAETPIIGAFKKGFLSDIIAEVYKRYKVTETSLLLDRMKDLGYEKSTESGLTVAMTDVTDLKEKPAILEDAHNQVATVTKQFRRGLITDDERYQRVTEIWTKAKDIIQDKLIESFEPTNPIFMMQDSGARGNISNFVQLAGMRGLMAGPGGKIIELPVTANFREGLTVMEMFISTHGARKGMSDTALKTANSGYLTRRLVDVAQDVIVREFDNDSDRGVAVKAIMDGTSVVEPLYDRILGRYAMKSVFDPETGEKIVSRNEMIDEDVAKAIVNAGIEEVTIRSVFTSTTEHGVSVLDYGRNLASGEEVEVGEAVGTVAAQSIGEPGTQLTMRNFHTGGVAGGNDITQGLPRVQEIVEARIPKGRAEISEVTGVVTAIEENPAERTKAVTIEGETDTRTYTLPLTARMRFAEGDEIQRGDAINEGPIDPKELLAVTDTLTTESYMLTEIQK.

Mg(2+)-binding residues include Asp-383, Asp-385, and Asp-387.

The protein belongs to the RNA polymerase beta' chain family. The RNAP catalytic core consists of 2 alpha, 1 beta, 1 beta' and 1 omega subunit. When a sigma factor is associated with the core the holoenzyme is formed, which can initiate transcription. It depends on Mg(2+) as a cofactor.

The enzyme catalyses RNA(n) + a ribonucleoside 5'-triphosphate = RNA(n+1) + diphosphate. DNA-dependent RNA polymerase catalyzes the transcription of DNA into RNA using the four ribonucleoside triphosphates as substrates. This Leuconostoc pseudomesenteroides protein is DNA-directed RNA polymerase subunit beta' (rpoC).